The chain runs to 562 residues: Apyrase (562 aa).

Residues 1 to 24 (MAGRPGYSEVIFLYVVSVAVIARA) form the signal peptide. A divalent metal cation contacts are provided by D47, H49, and D98. N112 is a glycosylation site (N-linked (GlcNAc...) asparagine). Residues N130, H233, and H257 each coordinate a divalent metal cation. R370 contacts AMP. An N-linked (GlcNAc...) asparagine glycan is attached at N390. AMP is bound by residues R405, F424, and D514.

It belongs to the 5'-nucleotidase family. In terms of assembly, (Microbial infection) Interacts with Zika virus envelope protein E and Zika virus-like particles; the interaction does not affect Zika virus replication in human endothelial cells and keratinocytes. The cofactor is a divalent metal cation. In terms of processing, the N-terminus is blocked. As to expression, female saliva (at protein level). Female salivary gland (at protein level). Not detected or low-level expression in female carcasses without salivary glands. Not detected in male tissues.

It localises to the secreted. It carries out the reaction a ribonucleoside 5'-triphosphate + 2 H2O = a ribonucleoside 5'-phosphate + 2 phosphate + 2 H(+). Functionally, facilitates hematophagy by preventing ADP-, collagen- and thrombin-dependent platelet aggregation in the host. Cleaves adenosine triphosphate (ATP) and adenosine diphosphate (ADP) to adenosine monophosphate (AMP) and inorganic phosphate. May reduce probing time by facilitating the speed of locating blood. Its function is as follows. (Microbial infection) Does not affect Zika virus replication in human endothelial cells and keratinocytes. The polypeptide is Apyrase (Aedes aegypti (Yellowfever mosquito)).